A 499-amino-acid chain; its full sequence is Cobyric acid synthase (499 aa).

One can recognise a GATase cobBQ-type domain in the interval 251–442; sequence SLDIAVVSLK…LHGVFDNLEW (192 aa). Cys332 functions as the Nucleophile in the catalytic mechanism. The active site involves His434.

Belongs to the CobB/CobQ family. CobQ subfamily.

It participates in cofactor biosynthesis; adenosylcobalamin biosynthesis. In terms of biological role, catalyzes amidations at positions B, D, E, and G on adenosylcobyrinic A,C-diamide. NH(2) groups are provided by glutamine, and one molecule of ATP is hydrogenolyzed for each amidation. The sequence is that of Cobyric acid synthase from Streptococcus sanguinis (strain SK36).